The sequence spans 334 residues: Magnesium-chelatase 38 kDa subunit (334 aa).

Residue Gly36 to Ser43 participates in ATP binding.

It belongs to the Mg-chelatase subunits D/I family.

It catalyses the reaction protoporphyrin IX + Mg(2+) + ATP + H2O = Mg-protoporphyrin IX + ADP + phosphate + 3 H(+). The protein operates within porphyrin-containing compound metabolism; bacteriochlorophyll biosynthesis. In terms of biological role, involved in bacteriochlorophyll biosynthesis; introduces a magnesium ion into protoporphyrin IX to yield Mg-protoporphyrin IX. This chain is Magnesium-chelatase 38 kDa subunit (bchI), found in Cereibacter sphaeroides (strain ATCC 17023 / DSM 158 / JCM 6121 / CCUG 31486 / LMG 2827 / NBRC 12203 / NCIMB 8253 / ATH 2.4.1.) (Rhodobacter sphaeroides).